Consider the following 603-residue polypeptide: Probable lysosomal cobalamin transporter (603 aa).

9 helical membrane-spanning segments follow: residues 13–33 (IWVA…ITVF), 50–70 (IVSL…IALV), 99–119 (IVYY…IPFA), 150–170 (IAFI…PTAA), 201–221 (LLMT…LALL), 318–338 (LFGG…MLIT), 353–373 (GYIL…VKAA), 381–401 (ILMA…IASV), and 422–442 (ALLI…YAVV). Residue Asn509 is glycosylated (N-linked (GlcNAc...) asparagine). The helical transmembrane segment at 512-532 (VFGAIDFWAQFAFLTVFLLVF) threads the bilayer. Asn543 carries N-linked (GlcNAc...) asparagine glycosylation. The interval 578 to 603 (AKRTVGGHPNGQGYGTSGTNGTASSR) is disordered. The segment covering 585–595 (HPNGQGYGTSG) has biased composition (gly residues). Asn597 carries N-linked (GlcNAc...) asparagine glycosylation.

This sequence belongs to the LIMR family. LMBRD1 subfamily.

It is found in the lysosome membrane. Its function is as follows. Probable lysosomal cobalamin transporter. Required to export cobalamin from lysosomes allowing its conversion to cofactors. The chain is Probable lysosomal cobalamin transporter from Neurospora crassa (strain ATCC 24698 / 74-OR23-1A / CBS 708.71 / DSM 1257 / FGSC 987).